A 300-amino-acid chain; its full sequence is Haloalkane dehalogenase (300 aa).

Residues 32-155 (AIVFQHGNPT…PAVRGVFQGF (124 aa)) enclose the AB hydrolase-1 domain. Asp109 acts as the Nucleophile in catalysis. Glu133 serves as the catalytic Proton donor. His273 acts as the Proton acceptor in catalysis.

The protein belongs to the haloalkane dehalogenase family. Type 2 subfamily. As to quaternary structure, monomer.

It carries out the reaction 1-haloalkane + H2O = a halide anion + a primary alcohol + H(+). Functionally, catalyzes hydrolytic cleavage of carbon-halogen bonds in halogenated aliphatic compounds, leading to the formation of the corresponding primary alcohols, halide ions and protons. This chain is Haloalkane dehalogenase, found in Mycobacterium bovis (strain BCG / Pasteur 1173P2).